The chain runs to 156 residues: Protein Smg homolog (156 aa).

The protein belongs to the Smg family.

This Halorhodospira halophila (strain DSM 244 / SL1) (Ectothiorhodospira halophila (strain DSM 244 / SL1)) protein is Protein Smg homolog.